A 214-amino-acid polypeptide reads, in one-letter code: Outer-membrane lipoprotein LolB (214 aa).

A signal peptide spans 1 to 25 (MNNLKRLTKTIFSCFTLSALLLLAG). C26 carries N-palmitoyl cysteine lipidation. A lipid anchor (S-diacylglycerol cysteine) is attached at C26.

This sequence belongs to the LolB family. As to quaternary structure, monomer.

The protein localises to the cell outer membrane. In terms of biological role, plays a critical role in the incorporation of lipoproteins in the outer membrane after they are released by the LolA protein. This chain is Outer-membrane lipoprotein LolB, found in Shewanella baltica (strain OS155 / ATCC BAA-1091).